The primary structure comprises 91 residues: Insertion element IS1 2 protein InsA (91 aa).

It belongs to the IS1 elements InsA family.

Its function is as follows. Absolutely required for transposition of IS1. The polypeptide is Insertion element IS1 2 protein InsA (insA2) (Escherichia coli (strain K12)).